Consider the following 114-residue polypeptide: Seed trypsin/chymotrypsin inhibitor TI5-72 (114 aa).

A signal peptide spans 1-28 (MELMNKKVMMKLALMVFLLSFAANVVNA). Positions 29–42 (RFDSTSFITQVLSN) are excised as a propeptide. 7 disulfide bridges follow: Cys50/Cys103, Cys51/Cys66, Cys54/Cys99, Cys56/Cys64, Cys73/Cys80, Cys77/Cys92, and Cys82/Cys90.

This sequence belongs to the Bowman-Birk serine protease inhibitor family. As to expression, seed.

In terms of biological role, inhibitor of trypsin and of chymotrypsin. May function as a natural phytochemical defense against predators. This is Seed trypsin/chymotrypsin inhibitor TI5-72 (TI572) from Pisum sativum (Garden pea).